The chain runs to 741 residues: MDIEDEENMSSSSTDVKENRNLDNVSPKDGSTPGPGEGSQLSNGGGGGPGRKRPLEEGSNGHSKYRLKKRRKTPGPVLPKNALMQLNEIKPGLQYTLLSQTGPVHAPLFVMSVEVNGQVFEGSGPTKKKAKLHAAEKALRSFVQFPNASEAHLAMGRTLSVNTDFTSDQADFPDTLFNGFETPDKAEPPFYVGSNGDDSFSSSGDLSLSASPVPASLAQPPLPVLPPFPPPSGKNPVMILNELRPGLKYDFLSESGESHAKSFVMSVVVDGQFFEGSGRNKKLAKARAAQSALAAIFNLHLDQTPSRQPIPSEGLQLHLPQVLADAVSRLVLGKFGDLTDNFSSPHARRKVLAGVVMTTGTDVKDAKVISVSTGTKCINGEYMSDRGLALNDCHAEIISRRSLLRFLYTQLELYLNNKDDQKRSIFQKSERGGFRLKENVQFHLYISTSPCGDARIFSPHEPILEGSRSYTQAGVQWCNHGSLQPRPPGLLSDPSTSTFQGAGTTEPADRHPNRKARGQLRTKIESGEGTIPVRSNASIQTWDGVLQGERLLTMSCSDKIARWNVVGIQGSLLSIFVEPIYFSSIILGSLYHGDHLSRAMYQRISNIEDLPPLYTLNKPLLSGISNAEARQPGKAPNFSVNWTVGDSAIEVINATTGKDELGRASRLCKHALYCRWMRVHGKVPSHLLRSKITKPNVYHESKLAAKEYQAAKARLFTAFIKAGLGAWVEKPTEQDQFSLTP.

The tract at residues 1–79 (MDIEDEENMS…RRKTPGPVLP (79 aa)) is disordered. Ser26 carries the phosphoserine modification. Gly residues predominate over residues 33-49 (PGPGEGSQLSNGGGGGP). Over residues 63–73 (SKYRLKKRRKT) the composition is skewed to basic residues. The DRBM 1 domain occupies 78–144 (LPKNALMQLN…AEKALRSFVQ (67 aa)). Interaction with substrate RNA stretches follow at residues 83–88 (LMQLNE) and 104–105 (VH). Residue Ser149 is modified to Phosphoserine. Residues 231-298 (PSGKNPVMIL…AQSALAAIFN (68 aa)) enclose the DRBM 2 domain. 2 interaction with substrate RNA regions span residues 237–242 (VMILNE) and His259. The 368-residue stretch at 370–737 (SVSTGTKCIN…VEKPTEQDQF (368 aa)) folds into the A to I editase domain. A Zn(2+)-binding site is contributed by His394. Glu396 serves as the catalytic Proton donor. 1D-myo-inositol hexakisphosphate-binding residues include Arg400 and Arg401. Position 451 (Cys451) interacts with Zn(2+). Residues 486–518 (RPPGLLSDPSTSTFQGAGTTEPADRHPNRKARG) are disordered. Polar residues predominate over residues 493–503 (DPSTSTFQGAG). Cys556 is a Zn(2+) binding site. The 1D-myo-inositol hexakisphosphate site is built by Lys559, Arg562, Lys669, Lys702, Lys712, and Lys730.

In terms of assembly, homodimer. Homodimerization is essential for its catalytic activity. Can form heterodimers with isoform 5 of ADAR/ADAR1. The cofactor is 1D-myo-inositol hexakisphosphate. In terms of tissue distribution, highly expressed in brain and heart and at lower levels in placenta. Fair expression in lung, liver and kidney. Detected in brain, heart, kidney, lung and liver (at protein level). As to expression, highly expressed in hippocampus and colon. Expressed in pediatric astrocytomas and the protein has a decreased RNA-editing activity. The decrease in RNA editing correlates with the grade of malignancy of the tumors, with the high grade tumors showing lower editing is seen.

The protein localises to the nucleus. The protein resides in the nucleolus. It carries out the reaction adenosine in double-stranded RNA + H2O + H(+) = inosine in double-stranded RNA + NH4(+). Catalyzes the hydrolytic deamination of adenosine to inosine in double-stranded RNA (dsRNA) referred to as A-to-I RNA editing. This may affect gene expression and function in a number of ways that include mRNA translation by changing codons and hence the amino acid sequence of proteins; pre-mRNA splicing by altering splice site recognition sequences; RNA stability by changing sequences involved in nuclease recognition; genetic stability in the case of RNA virus genomes by changing sequences during viral RNA replication; and RNA structure-dependent activities such as microRNA production or targeting or protein-RNA interactions. Can edit both viral and cellular RNAs and can edit RNAs at multiple sites (hyper-editing) or at specific sites (site-specific editing). Its cellular RNA substrates include: bladder cancer-associated protein (BLCAP), neurotransmitter receptors for glutamate (GRIA2 and GRIK2) and serotonin (HTR2C), GABA receptor (GABRA3) and potassium voltage-gated channel (KCNA1). Site-specific RNA editing of transcripts encoding these proteins results in amino acid substitutions which consequently alter their functional activities. Edits GRIA2 at both the Q/R and R/G sites efficiently but converts the adenosine in hotspot1 much less efficiently. Can exert a proviral effect towards human immunodeficiency virus type 1 (HIV-1) and enhances its replication via both an editing-dependent and editing-independent mechanism. The former involves editing of adenosines in the 5'UTR while the latter occurs via suppression of EIF2AK2/PKR activation and function. Can inhibit cell proliferation and migration and can stimulate exocytosis. In terms of biological role, has a lower catalytic activity than isoform 2. Functionally, has a higher catalytic activity than isoform 1. The protein is Double-stranded RNA-specific editase 1 of Homo sapiens (Human).